A 454-amino-acid chain; its full sequence is Maintenance of mitochondrial morphology protein 1 (454 aa).

At 1-117 (MESNYTGMDG…SFSSWSFAQG (117 aa)) the chain is on the lumenal side. The helical transmembrane segment at 118 to 138 (LIVGQVSVVLVLIFFIKFFIF) threads the bilayer. Topologically, residues 139-454 (SDSSTKTNPN…ESEPGRETHY (316 aa)) are cytoplasmic. The segment at 144-164 (KTNPNPAKNSSSTNSLSGLSS) is disordered. Over residues 153–164 (SSSTNSLSGLSS) the composition is skewed to low complexity. The SMP-LTD domain occupies 215–427 (PAESLDWFNV…EPRFQFIKLP (213 aa)). Positions 253, 411, 415, 430, 432, and 433 each coordinate a 1,2-diacyl-sn-glycero-3-phosphate. The segment at 434-454 (KNTREGKADVDESEPGRETHY) is disordered. Residues 435 to 454 (NTREGKADVDESEPGRETHY) show a composition bias toward basic and acidic residues.

This sequence belongs to the MMM1 family. In terms of assembly, homodimer. Component of the ER-mitochondria encounter structure (ERMES) or MDM complex, composed of MMM1, MDM10, MDM12 and MDM34. An MMM1 homodimer associates with one molecule of MDM12 on each side in a pairwise head-to-tail manner, and the SMP-LTD domains of MMM1 and MDM12 generate a continuous hydrophobic tunnel for phospholipid trafficking.

It is found in the endoplasmic reticulum membrane. Functionally, component of the ERMES/MDM complex, which serves as a molecular tether to connect the endoplasmic reticulum (ER) and mitochondria. Components of this complex are involved in the control of mitochondrial shape and protein biogenesis, and function in nonvesicular lipid trafficking between the ER and mitochondria. Preferentially binds to glycerophospholipids such as phosphatidylcholoine (PC), phosphatidic acid (PA), phosphatidylglycerol (PG), and phosphatidylserine (PS), but not to phosphatidylethanolamine (PE). The MDM12-MMM1 subcomplex functions in the major beta-barrel assembly pathway that is responsible for biogenesis of all outer membrane beta-barrel proteins, and acts in a late step after the SAM complex. The MDM10-MDM12-MMM1 subcomplex further acts in the TOM40-specific pathway after the action of the MDM12-MMM1 complex. Essential for establishing and maintaining the structure of mitochondria and maintenance of mtDNA nucleoids. The polypeptide is Maintenance of mitochondrial morphology protein 1 (Zygosaccharomyces rouxii (strain ATCC 2623 / CBS 732 / NBRC 1130 / NCYC 568 / NRRL Y-229)).